The chain runs to 481 residues: Phosphoglycerate kinase 1, chloroplastic (481 aa).

A chloroplast-targeting transit peptide spans 1–75 (MASAAASSAF…VRGKGSRGVV (75 aa)). The residue at position 81 (Ser81) is a Phosphoserine. (2R)-3-phosphoglycerate is bound by residues Ala99, Asp100, Asn102, Arg116, Thr138, His139, Gly141, Arg142, Arg197, His229, and Arg230. Gly275 provides a ligand contact to ADP. Gly275 contacts CDP. 2 residues coordinate AMP: Lys277 and Lys281. Lys281 contributes to the ATP binding site. Gly299 contacts ADP. Gly299 contacts CDP. Residues Gly300 and Gly372 each contribute to the AMP site. Residues Gly300 and Gly372 each coordinate ATP. CDP-binding residues include Gly397 and Phe402. Position 402 (Phe402) interacts with ADP. Glu403 contributes to the AMP binding site. Positions 403, 434, and 435 each coordinate ATP. Residue Asp434 participates in Mg(2+) binding.

It belongs to the phosphoglycerate kinase family. In terms of assembly, monomer. Binds to FTSZ2-1 and FTSZ2-2. Mg(2+) serves as cofactor.

It localises to the plastid. It is found in the chloroplast. It carries out the reaction (2R)-3-phosphoglycerate + ATP = (2R)-3-phospho-glyceroyl phosphate + ADP. It participates in carbohydrate biosynthesis; Calvin cycle. In terms of biological role, may trigger the phosphorylation of FTSZ2-1 and FTSZ2-2. This Arabidopsis thaliana (Mouse-ear cress) protein is Phosphoglycerate kinase 1, chloroplastic.